We begin with the raw amino-acid sequence, 674 residues long: Inorganic pyrophosphatase TTM2 (674 aa).

Positions 248 to 410 (SPTYILKSRK…PRTYIEQIQL (163 aa)) constitute a CYTH domain. Disordered regions lie at residues 457-498 (KNLK…SPAN) and 619-640 (RSRLARTGSSNSGNRGRSSKSS). Over residues 484–496 (SDRRYEERNHDSP) the composition is skewed to basic and acidic residues. The span at 623–640 (ARTGSSNSGNRGRSSKSS) shows a compositional bias: low complexity. A helical transmembrane segment spans residues 650–670 (LPLVLTVAICSIGIIVIKSYI).

Mg(2+) is required as a cofactor. Predominantly expressed in the shoot apices of inflorescences.

Its subcellular location is the mitochondrion outer membrane. It catalyses the reaction diphosphate + H2O = 2 phosphate + H(+). Its function is as follows. Exhibits pyrophosphatase activity with stronger affinity for pyrophosphate (PPi), moderate affinity for ATP and ADP, and weak affinity for tripolyphosphate (PPPi). No activity observed toward uridine substrate. Negative regulator of the salicylic acid (SA)-mediated amplification of defense responses against both virulent and avirulent pathogens, including oomycetes (e.g. H.arabidopsidis) and bacteria (e.g. P.syringae). Represses systemic acquired resistance (SAR). This Arabidopsis thaliana (Mouse-ear cress) protein is Inorganic pyrophosphatase TTM2.